A 374-amino-acid polypeptide reads, in one-letter code: tRNA (adenine(58)-N(1))-methyltransferase catalytic subunit TRM61 (374 aa).

Residues 120 to 122 (SGS), glutamate 138, arginine 143, 167 to 168 (DV), and aspartate 202 each bind S-adenosyl-L-methionine.

The protein belongs to the class I-like SAM-binding methyltransferase superfamily. TRM61 family. As to quaternary structure, heterotetramer; composed of two copies of TRM6 and two copies of TRM61.

The protein localises to the nucleus. It catalyses the reaction adenosine(58) in tRNA + S-adenosyl-L-methionine = N(1)-methyladenosine(58) in tRNA + S-adenosyl-L-homocysteine + H(+). In terms of biological role, catalytic subunit of tRNA (adenine-N(1)-)-methyltransferase, which catalyzes the formation of N(1)-methyladenine at position 58 (m1A58) in initiator methionyl-tRNA. The chain is tRNA (adenine(58)-N(1))-methyltransferase catalytic subunit TRM61 (TRM61) from Candida glabrata (strain ATCC 2001 / BCRC 20586 / JCM 3761 / NBRC 0622 / NRRL Y-65 / CBS 138) (Yeast).